A 90-amino-acid polypeptide reads, in one-letter code: UPF0213 protein lmo0166 (90 aa).

Residues 5 to 80 (SEHFFYVLKC…KKLSRKNKDA (76 aa)) form the GIY-YIG domain.

This sequence belongs to the UPF0213 family.

This chain is UPF0213 protein lmo0166, found in Listeria monocytogenes serovar 1/2a (strain ATCC BAA-679 / EGD-e).